Here is a 178-residue protein sequence, read N- to C-terminus: Hypoxanthine-guanine phosphoribosyltransferase (178 aa).

Diphosphate contacts are provided by Lys-46 and Gly-47. Asp-103 lines the Mg(2+) pocket. Residue Asp-106 is the Proton acceptor of the active site. GMP is bound by residues Lys-134, 155-156, and Asp-162; that span reads FL. A diphosphate-binding site is contributed by Arg-168.

This sequence belongs to the purine/pyrimidine phosphoribosyltransferase family. It depends on Mg(2+) as a cofactor.

It is found in the cytoplasm. The enzyme catalyses IMP + diphosphate = hypoxanthine + 5-phospho-alpha-D-ribose 1-diphosphate. It catalyses the reaction GMP + diphosphate = guanine + 5-phospho-alpha-D-ribose 1-diphosphate. It participates in purine metabolism; IMP biosynthesis via salvage pathway; IMP from hypoxanthine: step 1/1. Its pathway is purine metabolism; GMP biosynthesis via salvage pathway; GMP from guanine: step 1/1. Functionally, purine salvage pathway enzyme that catalyzes the transfer of the ribosyl-5-phosphate group from 5-phospho-alpha-D-ribose 1-diphosphate (PRPP) to the N9 position of the 6-oxopurines hypoxanthine and guanine to form the corresponding ribonucleotides IMP (inosine 5'-monophosphate) and GMP (guanosine 5'-monophosphate), with the release of PPi. This chain is Hypoxanthine-guanine phosphoribosyltransferase (hpt), found in Aquifex aeolicus (strain VF5).